A 46-amino-acid chain; its full sequence is Apamin (46 aa).

Residues 1 to 27 (MISMLRCIYLFLSVILITSYFVTPVMP) form the signal peptide. 2 cysteine pairs are disulfide-bonded: Cys28/Cys38 and Cys30/Cys42. Positions 40-41 (RR) are essential for toxin activity. His45 carries the post-translational modification Histidine amide.

As to expression, expressed by the venom gland.

It localises to the secreted. Functionally, toxin with unique selectivity to KCa2 channels. Potently blocks human, rat and mouse KCa2.2/KCNN2/SK2 channels (IC(50)=27-140 pM), and moderately blocks human and rat KCa2.3/KCNN3/SK3 channels (IC(50)=0.6-4 nM), and human (IC(50)=0.7-12 nM) and mouse (IC(50)=28 nM) KCa2.1/KCNN1/SK1 channels. Does not show any antimicrobial activity. In vivo, intracerebroventricular injection into rats of a dose of 1 ng results in neurodegeneration specifically in the Purkinje cells of the cerebellum, and induces seizures characterized by hypersensitivity to noise, loss of postural control, paroxystic jerking, and alternating periods of great agitation with tonic-clonic convulsions and periods of total prostration. When administered at high doses, exerts anti-inflammatory, anti-oxidative, anti-fibrotic and anti-apoptotic properties in several models of inflammatory disease, including gouty arthritis, atherosclerosis, atopic dermatitis and acute kidney injury. Down-regulates pro-inflammatory signaling pathways, such as the NF-kappaB and STAT3 pathways, probably by blocking SK channels such as KCa2.2/KCNN2/SK2 and/or KCa2.3/KCNN3/SK3 which are thought to be involved in promoting some inflammatory responses. For example in mouse and rat microglia cells, inhibits LPS-activated KCa2.2/KCNN2/SK2 channels and TLR4 expression leading to the down-regulation of the NF-kappaB, STAT, and MAPK/ERK signaling pathways and, as a consequence, decreases secretion of pro-inflammatory cytokines. This is Apamin from Apis mellifera (Honeybee).